The primary structure comprises 199 residues: Probable GTP-binding protein EngB (199 aa).

The EngB-type G domain occupies 28–199 (DIPEIALAGR…QAWDAILEQI (172 aa)). GTP-binding positions include 36–43 (GRSNVGKS), 63–67 (GKTQL), 81–84 (DVPG), 148–151 (TKAD), and 180–182 (FSS). Mg(2+)-binding residues include serine 43 and threonine 65.

It belongs to the TRAFAC class TrmE-Era-EngA-EngB-Septin-like GTPase superfamily. EngB GTPase family. The cofactor is Mg(2+).

Necessary for normal cell division and for the maintenance of normal septation. The polypeptide is Probable GTP-binding protein EngB (Streptococcus uberis (strain ATCC BAA-854 / 0140J)).